A 657-amino-acid chain; its full sequence is Trifunctional protein RibF/MnmA (657 aa).

An FMN adenylyltransferase region spans residues 1–141; that stretch reads MLSIINLTSK…VVKKDHCSTS (141 aa). The interval 158 to 282 is riboflavin kinase; that stretch reads LLLTPFYLKG…DKKAALSFFH (125 aa). The segment at 283 to 657 is tRNA-specific 2-thiouridylase MnmA; sequence KQEKPKVVVA…GGGKITKIIK (375 aa). Residues 292–299 and Met318 contribute to the ATP site; that span reads ALSGGVDS. Residues 389 to 391 are interaction with target base in tRNA; sequence NPD. Cys394 functions as the Nucleophile in the catalytic mechanism. Cys394 and Cys492 are joined by a disulfide. Gly420 provides a ligand contact to ATP. An interaction with tRNA region spans residues 442-444; that stretch reads KDQ. Residue Cys492 is the Cysteine persulfide intermediate of the active site.

This sequence in the N-terminal section; belongs to the RibF family. It in the C-terminal section; belongs to the MnmA/TRMU family.

It localises to the cytoplasm. The catalysed reaction is riboflavin + ATP = FMN + ADP + H(+). The enzyme catalyses FMN + ATP + H(+) = FAD + diphosphate. It carries out the reaction S-sulfanyl-L-cysteinyl-[protein] + uridine(34) in tRNA + AH2 + ATP = 2-thiouridine(34) in tRNA + L-cysteinyl-[protein] + A + AMP + diphosphate + H(+). The protein operates within cofactor biosynthesis; FAD biosynthesis; FAD from FMN: step 1/1. It functions in the pathway cofactor biosynthesis; FMN biosynthesis; FMN from riboflavin (ATP route): step 1/1. Involved in FAD and FMN biosynthesis. Its function is as follows. Catalyzes the 2-thiolation of uridine at the wobble position (U34) of tRNA, leading to the formation of s(2)U34. In Mycoplasmoides gallisepticum (strain R(low / passage 15 / clone 2)) (Mycoplasma gallisepticum), this protein is Trifunctional protein RibF/MnmA (ribF/mnmA).